The chain runs to 178 residues: Tetratricopeptide repeat protein 9C (178 aa).

TPR repeat units follow at residues 15 to 48, 79 to 114, and 115 to 148; these read ASSF…LRSL, ADCY…QPEN, and VKAL…APKD.

The protein belongs to the TTC9 family.

The polypeptide is Tetratricopeptide repeat protein 9C (ttc9c) (Xenopus tropicalis (Western clawed frog)).